An 827-amino-acid polypeptide reads, in one-letter code: MLDCLRLALLCALPWLLRAAVPGHQEEPLAKSAELRRDPRDPARGADFDRVYSGVVSLSTENIYSFNHTSHPGQVTAVRVHVNSSSDNLDYPVLVVVRQQKEVLSWQVPLLFQGLYQRSYNYQEVSRTLCPSKATNETGPLEQLIFVDVASMAPHGAHYKLLVTKIKHFQLPTNVAFYFTASPSQPQYFLYKFPEDVDSVIIKVVSEKAYPCSVVSVQNIMCPVYDLDHNVEFNGVYQSMTKKAAITLQKKDFPDEQFFVVFVIKPEDYACGGSFSIQENENQTWNLQRSKNLKVTIVPSIKESVYVKSSLFSIFVFLSFYLGCLLVVLVHHVRFQRKSIDGSFGSSDGSGNMAVSHPITASTPEGSNYGAIDESSSSPGRQMSSSDGGQPCHSDTDSSVEESDFDTMPDIESDKNVIRTKMFLYLSDLSRKDRRIVSKKYKIYFWNIITIAVFYALPVMQLVITYQTVVNVTGNQDICYYNFLCAHPLGVLSAFNNILSNLGHVLLGFLFLLIVLRRDLLHRRALEAKDIFAMEYGIPKHFGLFYAMGIALMMEGVLSACYHVCPNYSNFQFDTSFMYMIAGLCMLKLYQTRHPDINASAYSAYASFAVVITLTVLGVVFGKNDVWFWIIFSAIHILSSLALSTQIYYMGRFKIDLGIFRRAAMVFYTDCIQQCSRPLYMDRMVLLIVGNLVNWSFAFFGLIYRPRDFASYMLGIFICNLLLYLAFYIIMKLRSSEKVLPLPVFCIAATAVVWAAALYFFFQNLSSWEGTPAESREKNRECVLLDFFDDHDIWHFLSATALFFSFLVLLTLDDDLDVVRRDQIPVF.

The signal sequence occupies residues 1 to 19 (MLDCLRLALLCALPWLLRA). Over 20-309 (AVPGHQEEPL…SIKESVYVKS (290 aa)) the chain is Extracellular. N67, N83, N136, and N282 each carry an N-linked (GlcNAc...) asparagine glycan. Residues 310–330 (SLFSIFVFLSFYLGCLLVVLV) form a helical membrane-spanning segment. Residues 331-442 (HHVRFQRKSI…DRRIVSKKYK (112 aa)) lie on the Cytoplasmic side of the membrane. Residues 344 to 409 (FGSSDGSGNM…VEESDFDTMP (66 aa)) form a disordered region. The span at 375-386 (SSSSPGRQMSSS) shows a compositional bias: low complexity. The segment covering 398–409 (SSVEESDFDTMP) has biased composition (acidic residues). A helical transmembrane segment spans residues 443–463 (IYFWNIITIAVFYALPVMQLV). Topologically, residues 464-494 (ITYQTVVNVTGNQDICYYNFLCAHPLGVLSA) are extracellular. The N-linked (GlcNAc...) asparagine glycan is linked to N471. A helical membrane pass occupies residues 495–515 (FNNILSNLGHVLLGFLFLLIV). The Cytoplasmic portion of the chain corresponds to 516–541 (LRRDLLHRRALEAKDIFAMEYGIPKH). The helical transmembrane segment at 542 to 562 (FGLFYAMGIALMMEGVLSACY) threads the bilayer. Topologically, residues 563–572 (HVCPNYSNFQ) are extracellular. N-linked (GlcNAc...) asparagine glycosylation is present at N567. Residues 573–590 (FDTSFMYMIAGLCMLKLY) form a helical membrane-spanning segment. At 591 to 600 (QTRHPDINAS) the chain is on the cytoplasmic side. A helical membrane pass occupies residues 601 to 621 (AYSAYASFAVVITLTVLGVVF). The Extracellular segment spans residues 622–626 (GKNDV). The helical transmembrane segment at 627–647 (WFWIIFSAIHILSSLALSTQI) threads the bilayer. Topologically, residues 648–683 (YYMGRFKIDLGIFRRAAMVFYTDCIQQCSRPLYMDR) are cytoplasmic. A helical transmembrane segment spans residues 684 to 704 (MVLLIVGNLVNWSFAFFGLIY). Residues 705–710 (RPRDFA) are Extracellular-facing. Residues 711 to 731 (SYMLGIFICNLLLYLAFYIIM) form a helical membrane-spanning segment. At 732–741 (KLRSSEKVLP) the chain is on the cytoplasmic side. Residues 742–762 (LPVFCIAATAVVWAAALYFFF) form a helical membrane-spanning segment. At 763–791 (QNLSSWEGTPAESREKNRECVLLDFFDDH) the chain is on the extracellular side. The N-linked (GlcNAc...) asparagine glycan is linked to N764. Residues 792–812 (DIWHFLSATALFFSFLVLLTL) form a helical membrane-spanning segment. Residues 813–827 (DDDLDVVRRDQIPVF) lie on the Cytoplasmic side of the membrane.

This sequence belongs to the SID1 family.

Its subcellular location is the membrane. Functionally, in vitro binds long double-stranded RNA (dsRNA) (500 and 700 base pairs), but not dsRNA shorter than 300 bp. Not involved in RNA autophagy, a process in which RNA is directly imported into lysosomes in an ATP-dependent manner, and degraded. The sequence is that of SID1 transmembrane family member 1 (Sidt1) from Mus musculus (Mouse).